The chain runs to 84 residues: Putative lipoprotein RzoQ (84 aa).

An N-terminal signal peptide occupies residues 1-22 (MRNRNLLKFLPGLLICLIVLTS). A lipid anchor (N-palmitoyl cysteine) is attached at Cys-23. Cys-23 carries the S-diacylglycerol cysteine lipid modification.

Its subcellular location is the cell membrane. The chain is Putative lipoprotein RzoQ (rzoQ) from Escherichia coli (strain K12).